Consider the following 122-residue polypeptide: Small ribosomal subunit protein uS13c (122 aa).

This sequence belongs to the universal ribosomal protein uS13 family. In terms of assembly, part of the 30S ribosomal subunit.

The protein resides in the plastid. The protein localises to the chloroplast. Its function is as follows. Located at the top of the head of the 30S subunit, it contacts several helices of the 16S rRNA. In Cyanidium caldarium (Red alga), this protein is Small ribosomal subunit protein uS13c.